A 274-amino-acid polypeptide reads, in one-letter code: Transmembrane protein 106B (274 aa).

The segment covering 1–11 (MGKSLSHLPLH) has biased composition (low complexity). The tract at residues 1–20 (MGKSLSHLPLHSSKEDAYDG) is disordered. G2 is lipidated: N-myristoyl glycine. At 2–96 (GKSLSHLPLH…QRLRPRRTKL (95 aa)) the chain is on the cytoplasmic side. The residue at position 33 (S33) is a Phosphoserine. The helical transmembrane segment at 97 to 117 (YVMASVFVCLLLSGLAVFFLF) threads the bilayer. Topologically, residues 118-274 (PRSIDVKYIG…EYLNVLQPQQ (157 aa)) are lumenal. 4 N-linked (GlcNAc...) asparagine glycosylation sites follow: N145, N151, N164, and N183. An intrachain disulfide couples C214 to C253. N256 is a glycosylation site (N-linked (GlcNAc...) asparagine).

The protein belongs to the TMEM106 family. Can form homomers. Interacts (via N-terminus) with MAP6 (via C-terminus). Interacts (via C-terminus) with the vacuolar-type ATPase subunit ATP6AP1. Interacts (via N-terminus) with AP2M1 and CLTC. Interacts with TMEM106C. In terms of assembly, (Microbial infection) Interacts with SARS coronavirus-2/SARS-CoV-2 spike protein (via RBD domain). In terms of tissue distribution, expressed in the brain, including in the frontal cortex (at protein level). Expressed in lung epithelial cells.

It localises to the late endosome membrane. Its subcellular location is the lysosome membrane. It is found in the cell membrane. Its function is as follows. In neurons, involved in the transport of late endosomes/lysosomes. May be involved in dendrite morphogenesis and maintenance by regulating lysosomal trafficking. May act as a molecular brake for retrograde transport of late endosomes/lysosomes, possibly via its interaction with MAP6. In motoneurons, may mediate the axonal transport of lysosomes and axonal sorting at the initial segment. It remains unclear whether TMEM106B affects the transport of moving lysosomes in the anterograde or retrograde direction in neurites and whether it is important in the sorting of lysosomes in axons or in dendrites. In neurons, may also play a role in the regulation of lysosomal size and responsiveness to stress. Required for proper lysosomal acidification. Functionally, (Microbial infection) Plays a role in human coronavirus SARS-CoV-2 infection, but not in common cold coronaviruses HCoV-229E and HCoV-OC43 infections. Involved in ACE2-independent SARS-CoV-2 cell entry. Required for post-endocytic stage of virus entry, facilitates spike-mediated membrane fusion. Virus attachment and endocytosis can also be mediated by other cell surface receptors. The chain is Transmembrane protein 106B from Homo sapiens (Human).